The following is a 194-amino-acid chain: Flavin prenyltransferase UbiX (194 aa).

FMN is bound by residues 9–11 (GAS), S35, 86–89 (SIKT), and R121. Positions 151 and 167 each coordinate dimethylallyl phosphate.

This sequence belongs to the UbiX/PAD1 family.

It carries out the reaction dimethylallyl phosphate + FMNH2 = prenylated FMNH2 + phosphate. Its function is as follows. Involved in the carboxylation of phenylphosphate. Flavin prenyltransferase that catalyzes the synthesis of the prenylated FMN cofactor (prenyl-FMN) for 4-hydroxy-3-polyprenylbenzoic acid decarboxylase UbiD. The prenyltransferase is metal-independent and links a dimethylallyl moiety from dimethylallyl monophosphate (DMAP) to the flavin N5 and C6 atoms of FMN. The sequence is that of Flavin prenyltransferase UbiX from Thauera aromatica.